The chain runs to 1066 residues: E3 ubiquitin-protein ligase RNF31 (1066 aa).

Positions 1–479 (MPGDEERGFL…PEKQRQDKMR (479 aa)) are polyubiquitin-binding. Residues 70–141 (TLSTALNILE…SFPEGQEEPD (72 aa)) form the PUB domain. Positions 251–287 (LRQALPGSHQTASLSSSLPASSQPRPPSSSLALGDSS) are disordered. Low complexity predominate over residues 262 to 287 (ASLSSSLPASSQPRPPSSSLALGDSS). RanBP2-type zinc fingers lie at residues 293–325 (PANA…PKGC) and 344–373 (ARDQ…PRLA). A Phosphoserine modification is found at S377. A RanBP2-type 3 zinc finger spans residues 403 to 432 (QPQVWYCDHCTFCNSGPVWVCAMCNRTRDP). The segment at 434 to 478 (PTQPALQSYPSSLEKGRPKPGSSQHLGSSLPASCGDPEKQRQDKM) is disordered. A compositionally biased stretch (polar residues) spans 454-464 (GSSQHLGSSLP). Residues 469–478 (DPEKQRQDKM) show a composition bias toward basic and acidic residues. Residues 557–610 (GNLDEAVEECVRARRRKVHELQSLGFGPKEGSLQALFQHGGDVARALTELQRQR) are interaction with RBCK1. One can recognise a UBA domain in the interval 558-609 (NLDEAVEECVRARRRKVHELQSLGFGPKEGSLQALFQHGGDVARALTELQRQ). The segment at 689–923 (LAQECAVCGW…KSLHGHHPRD (235 aa)) is TRIAD supradomain. The Zn(2+) site is built by C693, C696, C711, C713, C716, C719, C738, C741, C793, C796, C811, C814, C819, C822, H830, C835, C865, and C868. The RING-type 1 zinc-finger motif lies at 693–743 (CAVCGWALPRNRMQALISCECTICPECFRQHFTIALKEKHITDMVCPACGR). The IBR-type zinc finger occupies 773 to 835 (ALFHKKLTEA…WEEQHRGRSC (63 aa)). The RING-type 2; atypical zinc-finger motif lies at 865–895 (CPKCKFSYALARGGCMHFHCTQCRHQFCSGC). C879 is a catalytic residue. Zn(2+) contacts are provided by C884, C887, C892, C895, C910, and H919. The segment at 904-1066 (KCPDPNCKVK…LGQSIARRRK (163 aa)) is LDD domain.

This sequence belongs to the RBR family. In terms of assembly, component of the LUBAC complex (linear ubiquitin chain assembly complex) which consists of SHARPIN, RBCK1 and RNF31. LUBAC has a MW of approximately 600 kDa suggesting a heteromultimeric assembly of its subunits. Associates with the TNF-R1 signaling complex (TNF-RSC) in a stimulation-dependent manner. Interacts (via the PUB domain) with OTULIN (via the PIM motif); the interaction is direct. Interacts (via the PUB domain) with VCP (via the PIM motif). Interacts (via the PUB domain) with SPATA2 (via the PIM motif); interaction is direct and bridges RNF31 and CYLD. Interacts with CYLD; the interaction is indirect and is mediated via SPATA2. Interacts with MUSK. Interacts with CARD11, promoting linear ubiquitination of BCL10. Autoubiquitinated. Interaction with OTULIN is required to suppress formation of 'Met-1'-linked polyubiquitin chains and prevent subsequent inactivation of the LUBAC complex. In terms of processing, cleaved by caspase during apoptosis. Widely expressed (at protein level). Not expressed in heart.

The protein resides in the cytoplasm. The catalysed reaction is [E2 ubiquitin-conjugating enzyme]-S-ubiquitinyl-L-cysteine + [acceptor protein]-L-lysine = [E2 ubiquitin-conjugating enzyme]-L-cysteine + [acceptor protein]-N(6)-ubiquitinyl-L-lysine.. It participates in protein modification; protein ubiquitination. Functionally, E3 ubiquitin-protein ligase component of the LUBAC complex which conjugates linear ('Met-1'-linked) polyubiquitin chains to substrates and plays a key role in NF-kappa-B activation and regulation of inflammation. LUBAC conjugates linear polyubiquitin to IKBKG and RIPK1 and is involved in activation of the canonical NF-kappa-B and the JNK signaling pathways. Linear ubiquitination mediated by the LUBAC complex interferes with TNF-induced cell death and thereby prevents inflammation. LUBAC is recruited to the TNF-R1 signaling complex (TNF-RSC) following polyubiquitination of TNF-RSC components by BIRC2 and/or BIRC3 and to conjugate linear polyubiquitin to IKBKG and possibly other components contributing to the stability of the complex. The LUBAC complex is also involved in innate immunity by conjugating linear polyubiquitin chains at the surface of bacteria invading the cytosol to form the ubiquitin coat surrounding bacteria. LUBAC is not able to initiate formation of the bacterial ubiquitin coat, and can only promote formation of linear polyubiquitins on pre-existing ubiquitin. Recruited to the surface of bacteria by RNF213, which initiates the bacterial ubiquitin coat. The bacterial ubiquitin coat acts as an 'eat-me' signal for xenophagy and promotes NF-kappa-B activation. Together with OTULIN, the LUBAC complex regulates the canonical Wnt signaling during angiogenesis. RNF31 is required for linear ubiquitination of BCL10, thereby promoting TCR-induced NF-kappa-B activation. Binds polyubiquitin of different linkage types. This Mus musculus (Mouse) protein is E3 ubiquitin-protein ligase RNF31.